The chain runs to 159 residues: Stress-induced protein 1 (159 aa).

Residues asparagine 33–serine 141 enclose the sHSP domain.

The protein belongs to the small heat shock protein (HSP20) family.

The sequence is that of Stress-induced protein 1 from Caenorhabditis elegans.